Consider the following 133-residue polypeptide: Small ribosomal subunit protein uS8 (133 aa).

The tract at residues 1–32 is disordered; it reads MANHDPISDMLTRIRNASEKRHESTKVPASRM. Over residues 16–25 the composition is skewed to basic and acidic residues; it reads NASEKRHEST.

Belongs to the universal ribosomal protein uS8 family. As to quaternary structure, part of the 30S ribosomal subunit. Contacts proteins S5 and S12.

In terms of biological role, one of the primary rRNA binding proteins, it binds directly to 16S rRNA central domain where it helps coordinate assembly of the platform of the 30S subunit. The sequence is that of Small ribosomal subunit protein uS8 from Synechococcus sp. (strain CC9311).